The chain runs to 418 residues: Adenylosuccinate synthetase 2 (418 aa).

GTP is bound by residues 12–18 and 40–42; these read GDEGKGR and GHT. Asp-13 (proton acceptor) is an active-site residue. Positions 13 and 40 each coordinate Mg(2+). IMP is bound by residues 13–16, 38–41, Thr-127, Lys-141, Thr-239, and Arg-301; these read DEGK and NAGH. The Proton donor role is filled by His-41. Residue 297–303 coordinates substrate; the sequence is AVTGRPR. GTP is bound by residues Arg-303, 329 to 331, and 407 to 409; these read KID and SVG.

The protein belongs to the adenylosuccinate synthetase family. In terms of assembly, homodimer. Mg(2+) is required as a cofactor.

It localises to the cytoplasm. It catalyses the reaction IMP + L-aspartate + GTP = N(6)-(1,2-dicarboxyethyl)-AMP + GDP + phosphate + 2 H(+). The protein operates within purine metabolism; AMP biosynthesis via de novo pathway; AMP from IMP: step 1/2. Its function is as follows. Plays an important role in the de novo pathway of purine nucleotide biosynthesis. Catalyzes the first committed step in the biosynthesis of AMP from IMP. The protein is Adenylosuccinate synthetase 2 of Pseudoalteromonas translucida (strain TAC 125).